The sequence spans 138 residues: Putative pre-16S rRNA nuclease (138 aa).

It belongs to the YqgF nuclease family.

The protein resides in the cytoplasm. In terms of biological role, could be a nuclease involved in processing of the 5'-end of pre-16S rRNA. The protein is Putative pre-16S rRNA nuclease of Caldicellulosiruptor saccharolyticus (strain ATCC 43494 / DSM 8903 / Tp8T 6331).